Consider the following 252-residue polypeptide: MSFTVVIPARYASSRLPGKPLADIGGKPMIQWVYEQALQAGAEDVIIATDDKRVSAAAEQFGGKVCMTSPNHESGTERLAEVVEKMAIPADHIVVNVQGDEPLIPPSIIRQVADNLAGCDAPMATLAVEIESEEEVFNPNAVKVVADERGYAMYFSRATIPWDRDNFAKQDKTIANPLMLHIGIYAYRAGFINTYVNWQPSALEQIECLEQLRVLWYGEKIHVEVAKEAPAAGVDTPEDLESVRAIVAKQAQ.

Belongs to the KdsB family.

The protein resides in the cytoplasm. It carries out the reaction 3-deoxy-alpha-D-manno-oct-2-ulosonate + CTP = CMP-3-deoxy-beta-D-manno-octulosonate + diphosphate. Its pathway is nucleotide-sugar biosynthesis; CMP-3-deoxy-D-manno-octulosonate biosynthesis; CMP-3-deoxy-D-manno-octulosonate from 3-deoxy-D-manno-octulosonate and CTP: step 1/1. It participates in bacterial outer membrane biogenesis; lipopolysaccharide biosynthesis. In terms of biological role, activates KDO (a required 8-carbon sugar) for incorporation into bacterial lipopolysaccharide in Gram-negative bacteria. This chain is 3-deoxy-manno-octulosonate cytidylyltransferase, found in Vibrio campbellii (strain ATCC BAA-1116).